The following is a 392-amino-acid chain: Phospho-N-acetylmuramoyl-pentapeptide-transferase (392 aa).

Transmembrane regions (helical) follow at residues 24–44, 76–96, 100–120, 137–157, 167–187, 193–213, 225–245, 262–282, 289–309, 314–334, and 369–389; these read YLTL…LIAG, TMGG…WFDL, FVWI…VDDW, YFWQ…SISE, FITW…GLLV, VSYP…IVGS, GLAI…AYVT, SGEL…FLWF, VFMG…IAVI, IVLA…MLQV, and QVVV…LTTL.

It belongs to the glycosyltransferase 4 family. MraY subfamily. Mg(2+) serves as cofactor.

The protein resides in the cell inner membrane. The enzyme catalyses UDP-N-acetyl-alpha-D-muramoyl-L-alanyl-gamma-D-glutamyl-meso-2,6-diaminopimeloyl-D-alanyl-D-alanine + di-trans,octa-cis-undecaprenyl phosphate = di-trans,octa-cis-undecaprenyl diphospho-N-acetyl-alpha-D-muramoyl-L-alanyl-D-glutamyl-meso-2,6-diaminopimeloyl-D-alanyl-D-alanine + UMP. It functions in the pathway cell wall biogenesis; peptidoglycan biosynthesis. Catalyzes the initial step of the lipid cycle reactions in the biosynthesis of the cell wall peptidoglycan: transfers peptidoglycan precursor phospho-MurNAc-pentapeptide from UDP-MurNAc-pentapeptide onto the lipid carrier undecaprenyl phosphate, yielding undecaprenyl-pyrophosphoryl-MurNAc-pentapeptide, known as lipid I. This Acidovorax ebreus (strain TPSY) (Diaphorobacter sp. (strain TPSY)) protein is Phospho-N-acetylmuramoyl-pentapeptide-transferase.